The sequence spans 540 residues: Ipecac alkaloid beta-glucosidase 9 (540 aa).

A beta-D-glucoside-binding positions include glutamine 36, histidine 140, 185–186 (NE), tyrosine 350, glutamate 421, tryptophan 470, and phenylalanine 486. The Proton donor role is filled by glutamate 186. Glutamate 421 (nucleophile) is an active-site residue.

Belongs to the glycosyl hydrolase 1 family.

It localises to the cytoplasm. It is found in the cytosol. The enzyme catalyses deacetylipecoside + H2O = deacetylipecoside aglycone + D-glucose. It carries out the reaction deacetylisoipecoside + H2O = deacetylisoipecoside aglycone + D-glucose. The protein operates within alkaloid biosynthesis. Functionally, beta-glucosidase catalyzing deglucosylation on N-deacetylisoipecoside and N-deacetylipecoside. The sequence is that of Ipecac alkaloid beta-glucosidase 9 from Carapichea ipecacuanha (Ipecac).